Reading from the N-terminus, the 691-residue chain is Protein vreteno (691 aa).

A disordered region spans residues 128-155 (QKEREITSDPVTSTEPMPTPGPAISATE). Tudor domains lie at 366 to 427 (KLQS…LAGL) and 573 to 630 (APPI…FIFP).

Interacts with aub and piwi. Gonad-specific.

Its subcellular location is the cytoplasm. It localises to the cytoplasmic ribonucleoprotein granule. Its function is as follows. Gonad-specific protein essential for germline development to repress transposable elements and preventing their mobilization, which is essential for the germline integrity. Acts via the piRNA metabolic process in both germline and somatic gonadal tissues by mediating the repression of transposable elements during meiosis. Required for primary piRNA biogenesis in both germline and somatic gonadal tissues. The chain is Protein vreteno (vret) from Drosophila melanogaster (Fruit fly).